The sequence spans 647 residues: Threonine--tRNA ligase (647 aa).

Residues 1–61 (MINITFPDGA…TEDGSIEIVT (61 aa)) form the TGS domain. The tract at residues 242 to 540 (DHRKLGKELD…LIENYKGAFP (299 aa)) is catalytic. 3 residues coordinate Zn(2+): Cys-336, His-387, and His-517.

Belongs to the class-II aminoacyl-tRNA synthetase family. Homodimer. Zn(2+) serves as cofactor.

It localises to the cytoplasm. The catalysed reaction is tRNA(Thr) + L-threonine + ATP = L-threonyl-tRNA(Thr) + AMP + diphosphate + H(+). In terms of biological role, catalyzes the attachment of threonine to tRNA(Thr) in a two-step reaction: L-threonine is first activated by ATP to form Thr-AMP and then transferred to the acceptor end of tRNA(Thr). Also edits incorrectly charged L-seryl-tRNA(Thr). The sequence is that of Threonine--tRNA ligase from Streptococcus pneumoniae (strain 70585).